A 281-amino-acid polypeptide reads, in one-letter code: Putative rRNA methyltransferase YqxC (281 aa).

The region spanning 6–67 (ERLDVLLVER…NPLRYVSRGG (62 aa)) is the S4 RNA-binding domain.

Belongs to the TlyA family.

In Bacillus subtilis (strain 168), this protein is Putative rRNA methyltransferase YqxC (yqxC).